A 428-amino-acid polypeptide reads, in one-letter code: Putative gustatory receptor 2a (428 aa).

The Cytoplasmic segment spans residues 1 to 40 (MDTLRALEPLHRACQVCNLWPWRLAPPPDSEGILLRRSRW). The chain crosses the membrane as a helical span at residues 41–61 (LELYGWTVLIAATSFTVYGLF). Topologically, residues 62–145 (QESSVEEKQD…INMRRQTSRR (84 aa)) are extracellular. The chain crosses the membrane as a helical span at residues 146-166 (AVWILWGYAVSQLLILGAKLL). Topologically, residues 167–173 (SRGDRFP) are cytoplasmic. Residues 174–194 (IYWISYLLPLLVCGLRYFQIF) traverse the membrane as a helical segment. N-linked (GlcNAc...) asparagine glycosylation is present at Asn-195. At 195–250 (NATQLVRQRLDVLLVALQQLQLHQKGPAVDTVLEEQEDLEEAAMDRLIAVRLVYQR) the chain is on the extracellular side. The helical transmembrane segment at 251–271 (VWALVALLNRCYGLSMLMQVG) threads the bilayer. Topologically, residues 272–300 (NDFLAITSNCYWMFLNFRQSAASPFDILQ) are cytoplasmic. The helical transmembrane segment at 301 to 321 (IVASGVWSAPHLGNVLVLSLL) threads the bilayer. Topologically, residues 322–349 (CDRTAQCASRLALCLHQVSVDLRNESHN) are extracellular. N-linked (GlcNAc...) asparagine glycosylation is present at Asn-345. The helical transmembrane segment at 350–370 (ALVGTLVRYCAPLIILVPLQI) threads the bilayer. Residues 371–395 (TQFSLQLLHQRLHFSAAGFFNVDCT) are Cytoplasmic-facing. Residues 396 to 416 (LLYTIVGATTTYLIILIQFHM) traverse the membrane as a helical segment. The Extracellular portion of the chain corresponds to 417 to 428 (SESTIGSDSNGQ).

Belongs to the insect chemoreceptor superfamily. Gustatory receptor (GR) family. Gr2a subfamily. Expressed in neurons of the terminal external chemosensory organ, the dorsal external chemosensory organ, as well as in the dorsal pharyngeal sense organ of larvae.

It localises to the cell membrane. In terms of biological role, probable gustatory receptor which mediates acceptance or avoidance behavior, depending on its not yet determined substrates. This Drosophila melanogaster (Fruit fly) protein is Putative gustatory receptor 2a (Gr2a).